The primary structure comprises 417 residues: MLEQMGIAAKQASYKLAQLSSREKNRVLEKIADELEAQSESILNANAQDVADARANGLSEAMLDRLALTPARLKGIADDVRQVCNLADPVGQVIDGGVLDSGLRLERRRVPLGVIGVIYEARPNVTVDVASLCLKTGNAVILRGGKETCRTNAATVAVIQDALKSCGLPAGAVQAIDNPDRALVSEMLRMDKYIDMLIPRGGAGLHKLCREQSTIPVITGGIGVCHIYVDESAEIAEALKVIVNAKTQRPSTCNTVETLLVNKNIADSFLPALSKQMAESSVTLHADVAALAQLQAGPAKVVAVKAEEYDDEFLSLDLNVKIVSDLDDAIAHIREHGTQHSDAILTRDMRNAQRFVNEVDSSAVYVNASTRFTDGGQFGLGAEVAVSTQKLHARGPMGLEALTTYKWIGIGDYTIRA.

It belongs to the gamma-glutamyl phosphate reductase family.

The protein localises to the cytoplasm. The catalysed reaction is L-glutamate 5-semialdehyde + phosphate + NADP(+) = L-glutamyl 5-phosphate + NADPH + H(+). The protein operates within amino-acid biosynthesis; L-proline biosynthesis; L-glutamate 5-semialdehyde from L-glutamate: step 2/2. Catalyzes the NADPH-dependent reduction of L-glutamate 5-phosphate into L-glutamate 5-semialdehyde and phosphate. The product spontaneously undergoes cyclization to form 1-pyrroline-5-carboxylate. This Escherichia coli O127:H6 (strain E2348/69 / EPEC) protein is Gamma-glutamyl phosphate reductase.